We begin with the raw amino-acid sequence, 187 residues long: Elongation factor P (187 aa).

This sequence belongs to the elongation factor P family.

Its subcellular location is the cytoplasm. Its pathway is protein biosynthesis; polypeptide chain elongation. In terms of biological role, involved in peptide bond synthesis. Stimulates efficient translation and peptide-bond synthesis on native or reconstituted 70S ribosomes in vitro. Probably functions indirectly by altering the affinity of the ribosome for aminoacyl-tRNA, thus increasing their reactivity as acceptors for peptidyl transferase. The chain is Elongation factor P from Zymomonas mobilis subsp. mobilis (strain ATCC 31821 / ZM4 / CP4).